Reading from the N-terminus, the 95-residue chain is uncharacterized protein (95 aa).

This is an uncharacterized protein from Saccharomyces cerevisiae (strain ATCC 204508 / S288c) (Baker's yeast).